The chain runs to 246 residues: Large ribosomal subunit protein uL30 (246 aa).

Belongs to the universal ribosomal protein uL30 family.

In terms of biological role, binds to G-rich structures in 28S rRNA and in mRNAs. Plays a regulatory role in the translation apparatus; inhibits cell-free translation of mRNAs. The sequence is that of Large ribosomal subunit protein uL30 (rpl7) from Dictyostelium discoideum (Social amoeba).